The sequence spans 89 residues: Large ribosomal subunit protein bL28 (89 aa).

This sequence belongs to the bacterial ribosomal protein bL28 family.

The chain is Large ribosomal subunit protein bL28 from Chlamydia felis (strain Fe/C-56) (Chlamydophila felis).